The chain runs to 148 residues: Augurin (148 aa).

The first 31 residues, 1–31 (MGTSSARPAVLALAGLALLLLLCLGPGDVSG), serve as a signal peptide directing secretion. 2 propeptides span residues 32–68 (NKLK…LKRA) and 133–148 (SREG…YDDY).

Belongs to the augurin family. In terms of tissue distribution, expressed in the brain, with expression in the choroid plexus and the ventricular ependymal cells (at protein level).

It is found in the secreted. The protein resides in the cytoplasm. It localises to the apical cell membrane. Probable hormone that may attenuate cell proliferation and induce senescence of oligodendrocyte and neural precursor cells in the central nervous system. ECRG4-induced senescence is characterized by G1 arrest, RB1 dephosphorylation and accelerated CCND1 and CCND3 proteasomal degradation. This is Augurin from Rattus norvegicus (Rat).